We begin with the raw amino-acid sequence, 294 residues long: 4-hydroxy-tetrahydrodipicolinate synthase (294 aa).

Position 45 (threonine 45) interacts with pyruvate. Catalysis depends on tyrosine 133, which acts as the Proton donor/acceptor. Lysine 161 serves as the catalytic Schiff-base intermediate with substrate. Isoleucine 203 is a binding site for pyruvate.

This sequence belongs to the DapA family. In terms of assembly, homotetramer; dimer of dimers.

It localises to the cytoplasm. The enzyme catalyses L-aspartate 4-semialdehyde + pyruvate = (2S,4S)-4-hydroxy-2,3,4,5-tetrahydrodipicolinate + H2O + H(+). It functions in the pathway amino-acid biosynthesis; L-lysine biosynthesis via DAP pathway; (S)-tetrahydrodipicolinate from L-aspartate: step 3/4. Functionally, catalyzes the condensation of (S)-aspartate-beta-semialdehyde [(S)-ASA] and pyruvate to 4-hydroxy-tetrahydrodipicolinate (HTPA). The chain is 4-hydroxy-tetrahydrodipicolinate synthase from Buchnera aphidicola subsp. Schizaphis graminum (strain Sg).